The sequence spans 412 residues: POU domain, class 4, transcription factor 2 (412 aa).

A disordered region spans residues 29-96; sequence LHSASPGSSA…SEAMRRACLP (68 aa). Positions 31 to 53 are enriched in low complexity; sequence SASPGSSAPAAPSASSPSSSSNA. Composition is skewed to gly residues over residues 54–70 and 78–87; these read GSGG…GGGR and GSGGGGGGGS. The required for transcriptional activation stretch occupies residues 94–240; the sequence is CLPTPPSNIF…MHQAALSMAH (147 aa). The POU-IV box motif lies at 113–122; sequence RAEALAAVDI. The disordered stretch occupies residues 123-191; the sequence is VSQSKSHHHH…HHHHQPHQAL (69 aa). Positions 127 to 138 are enriched in basic residues; that stretch reads KSHHHHPPHHSP. Positions 152 to 169 are enriched in low complexity; sequence PCTSAASSSSVPISHPSA. Residues 173 to 187 show a composition bias toward basic residues; that stretch reads THHHHHHHHHHHHQP. The Nuclear speckle targeting signal motif lies at 174–188; that stretch reads HHHHHHHHHHHHQPH. The required for DNA-binding and transcriptional repression stretch occupies residues 241-412; it reads AHGLPSHMGC…QKRMKYSAGI (172 aa). Residues 253–330 enclose the POU-specific domain; that stretch reads DVDADPRDLE…ILQAWLEEAE (78 aa). Positions 348-407 form a DNA-binding region, homeobox; sequence KKRKRTSIAAPEKRSLEAYFAIQPRPSSEKIAAIAEKLDLKKNVVRVWFCNQRQKQKRMK.

This sequence belongs to the POU transcription factor family. Class-4 subfamily. Interacts with POU4F1; this interaction inhibits both POU4F1 DNA-binding and transcriptional activities. Interacts (C-terminus) with ESR1 (via DNA-binding domain); this interaction increases the estrogen receptor ESR1 transcriptional activity in a DNA- and ligand 17-beta-estradiol-independent manner. Interacts (via C-terminus) with TP53 (via N-terminus). Interacts with DLX1 (via homeobox DNA-binding domain); this interaction suppresses DLX1-mediated transcriptional activity in postnatal retina enhancing retinal ganglion cell (RGC) differentiation. Interacts with DLX2 (via homeobox DNA-binding domain); this interaction enhances RGC differentiation. Interacts (via C-terminus) with ISL1 (via C-terminus). Interacts with ISL2. Interacts with LHX2. As to expression, expressed in the heart, brain and spinal cord. Expressed in cardiomyocytes (at protein level). Expressed in brain and spinal cord. Expressed in dorsal root ganglion (RGD) neurons.

It is found in the nucleus. It localises to the nucleus speckle. The protein localises to the cytoplasm. Its function is as follows. Tissue-specific DNA-binding transcription factor involved in the development and differentiation of target cells. Functions either as activator or repressor modulating the rate of target gene transcription through RNA polymerase II enzyme in a promoter-dependent manner. Binds to the consensus octamer motif 5'-AT[A/T]A[T/A]T[A/T]A-3' of promoter of target genes. Plays a fundamental role in the gene regulatory network essential for retinal ganglion cell (RGC) differentiation. Binds to an octamer site to form a ternary complex with ISL1; cooperates positively with ISL1 and ISL2 to potentiate transcriptional activation of RGC target genes being involved in RGC fate commitment in the developing retina and RGC axon formation and pathfinding. Inhibits DLX1 and DLX2 transcriptional activities preventing DLX1- and DLX2-mediated ability to promote amacrine cell fate specification. In cooperation with TP53 potentiates transcriptional activation of BAX promoter activity increasing neuronal cell apoptosis. Negatively regulates BAX promoter activity in the absence of TP53. Acts as a transcriptional coactivator via its interaction with the transcription factor ESR1 by enhancing its effect on estrogen response element (ERE)-containing promoter. Antagonizes the transcriptional stimulatory activity of POU4F1 by preventing its binding to an octamer motif. Involved in TNFSF11-mediated terminal osteoclast differentiation. The protein is POU domain, class 4, transcription factor 2 of Rattus norvegicus (Rat).